A 245-amino-acid polypeptide reads, in one-letter code: tRNA (guanine-N(1)-)-methyltransferase (245 aa).

Residues Gly-111 and 131-136 (MGDYVL) contribute to the S-adenosyl-L-methionine site.

The protein belongs to the RNA methyltransferase TrmD family. As to quaternary structure, homodimer.

Its subcellular location is the cytoplasm. The enzyme catalyses guanosine(37) in tRNA + S-adenosyl-L-methionine = N(1)-methylguanosine(37) in tRNA + S-adenosyl-L-homocysteine + H(+). In terms of biological role, specifically methylates guanosine-37 in various tRNAs. In Staphylococcus aureus (strain MRSA252), this protein is tRNA (guanine-N(1)-)-methyltransferase.